Reading from the N-terminus, the 475-residue chain is tRNA (guanine(37)-N(1))-methyltransferase (475 aa).

S-adenosyl-L-methionine-binding positions include histidine 219, 258 to 259 (DL), and 286 to 287 (DG). The interval 306–328 (KITKQKPTSNDKKRNRKVESPTV) is disordered. Residue asparagine 349 participates in S-adenosyl-L-methionine binding. Over residues 456–469 (NLVSQSDVSKSSDN) the composition is skewed to polar residues. Positions 456–475 (NLVSQSDVSKSSDNILEKDT) are disordered.

Belongs to the class I-like SAM-binding methyltransferase superfamily. TRM5/TYW2 family. In terms of assembly, monomer.

Its subcellular location is the mitochondrion matrix. The protein localises to the nucleus. It localises to the cytoplasm. The enzyme catalyses guanosine(37) in tRNA + S-adenosyl-L-methionine = N(1)-methylguanosine(37) in tRNA + S-adenosyl-L-homocysteine + H(+). Functionally, specifically methylates the N1 position of guanosine-37 in various cytoplasmic and mitochondrial tRNAs. Methylation is not dependent on the nature of the nucleoside 5' of the target nucleoside. This is the first step in the biosynthesis of wybutosine (yW), a modified base adjacent to the anticodon of tRNAs and required for accurate decoding. In Batrachochytrium dendrobatidis (strain JAM81 / FGSC 10211) (Frog chytrid fungus), this protein is tRNA (guanine(37)-N(1))-methyltransferase.